The sequence spans 468 residues: 3-isopropylmalate dehydratase large subunit (468 aa).

Cys-349, Cys-409, and Cys-412 together coordinate [4Fe-4S] cluster.

It belongs to the aconitase/IPM isomerase family. LeuC type 1 subfamily. In terms of assembly, heterodimer of LeuC and LeuD. [4Fe-4S] cluster serves as cofactor.

It catalyses the reaction (2R,3S)-3-isopropylmalate = (2S)-2-isopropylmalate. It participates in amino-acid biosynthesis; L-leucine biosynthesis; L-leucine from 3-methyl-2-oxobutanoate: step 2/4. Its function is as follows. Catalyzes the isomerization between 2-isopropylmalate and 3-isopropylmalate, via the formation of 2-isopropylmaleate. This Ruegeria pomeroyi (strain ATCC 700808 / DSM 15171 / DSS-3) (Silicibacter pomeroyi) protein is 3-isopropylmalate dehydratase large subunit.